Reading from the N-terminus, the 425-residue chain is cAMP/cGMP-dependent 3',5'-cAMP/cGMP phosphodiesterase 7 (425 aa).

Positions 1–17 are cleaved as a signal peptide; it reads MKYLILILIFFIEINNG.

The protein belongs to the cyclic nucleotide phosphodiesterase class-II family.

It localises to the secreted. The protein localises to the extracellular space. The protein resides in the cell surface. It carries out the reaction 3',5'-cyclic AMP + H2O = AMP + H(+). The enzyme catalyses 3',5'-cyclic GMP + H2O = GMP + H(+). Inhibited by dithiotreitol (DTT). In terms of biological role, phosphodiesterase with dual cAMP/cGMP specificity. However, displays a preference for cAMP over cGMP. Seems to regulate cAMP/cGMP concentration especially during cell aggregation. The sequence is that of cAMP/cGMP-dependent 3',5'-cAMP/cGMP phosphodiesterase 7 (pde7) from Dictyostelium discoideum (Social amoeba).